The following is a 151-amino-acid chain: S-ribosylhomocysteine lyase (151 aa).

His54, His58, and Cys121 together coordinate Fe cation.

This sequence belongs to the LuxS family. Homodimer. Requires Fe cation as cofactor.

The enzyme catalyses S-(5-deoxy-D-ribos-5-yl)-L-homocysteine = (S)-4,5-dihydroxypentane-2,3-dione + L-homocysteine. Involved in the synthesis of autoinducer 2 (AI-2) which is secreted by bacteria and is used to communicate both the cell density and the metabolic potential of the environment. The regulation of gene expression in response to changes in cell density is called quorum sensing. Catalyzes the transformation of S-ribosylhomocysteine (RHC) to homocysteine (HC) and 4,5-dihydroxy-2,3-pentadione (DPD). In Clostridium perfringens (strain ATCC 13124 / DSM 756 / JCM 1290 / NCIMB 6125 / NCTC 8237 / Type A), this protein is S-ribosylhomocysteine lyase.